The following is a 685-amino-acid chain: Putative protein FAR1-RELATED SEQUENCE 10 (685 aa).

The FAR1 domain maps to 69–161 (EYYSTFARKS…SNVHNHELLE (93 aa)). In terms of domain architecture, MULE spans 292–388 (VVVFDTSYRS…FMSHIVSKLA (97 aa)). The SWIM-type zinc finger occupies 565–603 (GECCVIWNPENEEIQCSCKEFEHSGILCRHTLRVLTVKN).

This sequence belongs to the FHY3/FAR1 family.

This Arabidopsis thaliana (Mouse-ear cress) protein is Putative protein FAR1-RELATED SEQUENCE 10 (FRS10).